The chain runs to 258 residues: Aspartate/glutamate leucyltransferase (258 aa).

This sequence belongs to the R-transferase family. Bpt subfamily.

The protein resides in the cytoplasm. It catalyses the reaction N-terminal L-glutamyl-[protein] + L-leucyl-tRNA(Leu) = N-terminal L-leucyl-L-glutamyl-[protein] + tRNA(Leu) + H(+). The enzyme catalyses N-terminal L-aspartyl-[protein] + L-leucyl-tRNA(Leu) = N-terminal L-leucyl-L-aspartyl-[protein] + tRNA(Leu) + H(+). In terms of biological role, functions in the N-end rule pathway of protein degradation where it conjugates Leu from its aminoacyl-tRNA to the N-termini of proteins containing an N-terminal aspartate or glutamate. The protein is Aspartate/glutamate leucyltransferase of Rhizobium leguminosarum bv. trifolii (strain WSM2304).